The following is a 194-amino-acid chain: Methylthioribulose-1-phosphate dehydratase (194 aa).

His-84 and His-86 together coordinate Zn(2+).

It belongs to the aldolase class II family. MtnB subfamily. The cofactor is Zn(2+).

The enzyme catalyses 5-(methylsulfanyl)-D-ribulose 1-phosphate = 5-methylsulfanyl-2,3-dioxopentyl phosphate + H2O. It functions in the pathway amino-acid biosynthesis; L-methionine biosynthesis via salvage pathway; L-methionine from S-methyl-5-thio-alpha-D-ribose 1-phosphate: step 2/6. Catalyzes the dehydration of methylthioribulose-1-phosphate (MTRu-1-P) into 2,3-diketo-5-methylthiopentyl-1-phosphate (DK-MTP-1-P). This chain is Methylthioribulose-1-phosphate dehydratase, found in Cronobacter sakazakii (Enterobacter sakazakii).